The sequence spans 295 residues: Light-independent protochlorophyllide reductase iron-sulfur ATP-binding protein (295 aa).

ATP-binding positions include 39–44 and K68; that span reads GIGKST. Position 43 (S43) interacts with Mg(2+). [4Fe-4S] cluster contacts are provided by C124 and C158. Position 209–210 (209–210) interacts with ATP; the sequence is NR.

This sequence belongs to the NifH/BchL/ChlL family. In terms of assembly, homodimer. Protochlorophyllide reductase is composed of three subunits; ChlL, ChlN and ChlB. Requires [4Fe-4S] cluster as cofactor.

The catalysed reaction is chlorophyllide a + oxidized 2[4Fe-4S]-[ferredoxin] + 2 ADP + 2 phosphate = protochlorophyllide a + reduced 2[4Fe-4S]-[ferredoxin] + 2 ATP + 2 H2O. It participates in porphyrin-containing compound metabolism; chlorophyll biosynthesis (light-independent). Component of the dark-operative protochlorophyllide reductase (DPOR) that uses Mg-ATP and reduced ferredoxin to reduce ring D of protochlorophyllide (Pchlide) to form chlorophyllide a (Chlide). This reaction is light-independent. The L component serves as a unique electron donor to the NB-component of the complex, and binds Mg-ATP. The protein is Light-independent protochlorophyllide reductase iron-sulfur ATP-binding protein of Prochlorococcus marinus (strain MIT 9312).